Reading from the N-terminus, the 273-residue chain is Formamidopyrimidine-DNA glycosylase (273 aa).

The active-site Schiff-base intermediate with DNA is proline 2. Glutamate 3 (proton donor) is an active-site residue. The Proton donor; for beta-elimination activity role is filled by lysine 57. DNA contacts are provided by histidine 91, arginine 110, and lysine 151. The FPG-type zinc finger occupies 236–270 (QVYGRKDEACNDCGTIIEAKVIGQRNSYFCPHCQM). The Proton donor; for delta-elimination activity role is filled by arginine 260.

This sequence belongs to the FPG family. Monomer. Zn(2+) is required as a cofactor.

It catalyses the reaction Hydrolysis of DNA containing ring-opened 7-methylguanine residues, releasing 2,6-diamino-4-hydroxy-5-(N-methyl)formamidopyrimidine.. It carries out the reaction 2'-deoxyribonucleotide-(2'-deoxyribose 5'-phosphate)-2'-deoxyribonucleotide-DNA = a 3'-end 2'-deoxyribonucleotide-(2,3-dehydro-2,3-deoxyribose 5'-phosphate)-DNA + a 5'-end 5'-phospho-2'-deoxyribonucleoside-DNA + H(+). Its function is as follows. Involved in base excision repair of DNA damaged by oxidation or by mutagenic agents. Acts as a DNA glycosylase that recognizes and removes damaged bases. Has a preference for oxidized purines, such as 7,8-dihydro-8-oxoguanine (8-oxoG). Has AP (apurinic/apyrimidinic) lyase activity and introduces nicks in the DNA strand. Cleaves the DNA backbone by beta-delta elimination to generate a single-strand break at the site of the removed base with both 3'- and 5'-phosphates. This Actinobacillus pleuropneumoniae serotype 3 (strain JL03) protein is Formamidopyrimidine-DNA glycosylase.